A 340-amino-acid polypeptide reads, in one-letter code: Glycerol-3-phosphate dehydrogenase [NAD(P)+] (340 aa).

NADPH contacts are provided by serine 13, tyrosine 14, and lysine 108. 3 residues coordinate sn-glycerol 3-phosphate: lysine 108, glycine 137, and threonine 139. Alanine 141 provides a ligand contact to NADPH. Residues lysine 193, aspartate 246, serine 256, arginine 257, and asparagine 258 each contribute to the sn-glycerol 3-phosphate site. The active-site Proton acceptor is lysine 193. Position 257 (arginine 257) interacts with NADPH. The NADPH site is built by isoleucine 281 and glutamate 283.

This sequence belongs to the NAD-dependent glycerol-3-phosphate dehydrogenase family.

It is found in the cytoplasm. The catalysed reaction is sn-glycerol 3-phosphate + NAD(+) = dihydroxyacetone phosphate + NADH + H(+). It carries out the reaction sn-glycerol 3-phosphate + NADP(+) = dihydroxyacetone phosphate + NADPH + H(+). It functions in the pathway membrane lipid metabolism; glycerophospholipid metabolism. Catalyzes the reduction of the glycolytic intermediate dihydroxyacetone phosphate (DHAP) to sn-glycerol 3-phosphate (G3P), the key precursor for phospholipid synthesis. The polypeptide is Glycerol-3-phosphate dehydrogenase [NAD(P)+] (Bartonella quintana (strain Toulouse) (Rochalimaea quintana)).